The primary structure comprises 536 residues: Maintenance of mitochondrial morphology protein 1 (536 aa).

The Lumenal portion of the chain corresponds to 1-25 (MAGPSNQTQPPPPVLTQPSLSFTQG). Residues 26 to 46 (LLVGQLSVVLLIGAFIKFFIF) traverse the membrane as a helical segment. Residues 47–536 (GEAPPHPSRN…GSMPDPVVVT (490 aa)) are Cytoplasmic-facing. 4 disordered regions span residues 52-135 (HPSR…SHQP), 275-331 (GPGT…ATAA), 416-467 (GRTG…GGSM), and 505-536 (YGGA…VVVT). 3 stretches are compositionally biased toward polar residues: residues 69–81 (YSLN…SSPR), 88–105 (STSN…NTRS), and 112–121 (YSATPTNPTS). The span at 122-132 (KHSRSRPHHSS) shows a compositional bias: basic residues. In terms of domain architecture, SMP-LTD spans 134–409 (QPESLDWFNV…EPRVQVVGLP (276 aa)). The segment covering 321–331 (TNTNTAGATAA) has biased composition (low complexity). Gly residues-rich tracts occupy residues 442–467 (TAGG…GGSM) and 507–517 (GAQGGGGGGGR).

Belongs to the MMM1 family. As to quaternary structure, homodimer. Component of the ER-mitochondria encounter structure (ERMES) or MDM complex, composed of MMM1, MDM10, MDM12 and MDM34. An MMM1 homodimer associates with one molecule of MDM12 on each side in a pairwise head-to-tail manner, and the SMP-LTD domains of MMM1 and MDM12 generate a continuous hydrophobic tunnel for phospholipid trafficking.

Its subcellular location is the endoplasmic reticulum membrane. Functionally, component of the ERMES/MDM complex, which serves as a molecular tether to connect the endoplasmic reticulum (ER) and mitochondria. Components of this complex are involved in the control of mitochondrial shape and protein biogenesis, and function in nonvesicular lipid trafficking between the ER and mitochondria. The MDM12-MMM1 subcomplex functions in the major beta-barrel assembly pathway that is responsible for biogenesis of all outer membrane beta-barrel proteins, and acts in a late step after the SAM complex. The MDM10-MDM12-MMM1 subcomplex further acts in the TOM40-specific pathway after the action of the MDM12-MMM1 complex. Essential for establishing and maintaining the structure of mitochondria and maintenance of mtDNA nucleoids. This is Maintenance of mitochondrial morphology protein 1 from Ajellomyces dermatitidis (strain ER-3 / ATCC MYA-2586) (Blastomyces dermatitidis).